A 203-amino-acid polypeptide reads, in one-letter code: Endo-type membrane-bound lytic murein transglycosylase A (203 aa).

The signal sequence occupies residues 1–15 (MKLRWLMWLVVFLAG). Cysteine 16 carries N-palmitoyl cysteine lipidation. Residue cysteine 16 is the site of S-diacylglycerol cysteine attachment.

This sequence belongs to the transglycosylase Slt family.

Its subcellular location is the cell outer membrane. It catalyses the reaction Endolytic cleavage of the (1-&gt;4)-beta-glycosidic linkage between N-acetylmuramic acid (MurNAc) and N-acetylglucosamine (GlcNAc) residues in peptidoglycan with concomitant formation of a 1,6-anhydrobond in the MurNAc residue.. In terms of biological role, murein-degrading enzyme. May play a role in recycling of muropeptides during cell elongation and/or cell division. Preferentially cleaves at a distance of more than two disaccharide units from the ends of the glycan chain. This chain is Endo-type membrane-bound lytic murein transglycosylase A, found in Cronobacter sakazakii (strain ATCC BAA-894) (Enterobacter sakazakii).